The following is a 421-amino-acid chain: UDP-N-acetylglucosamine 1-carboxyvinyltransferase (421 aa).

Residue 22–23 participates in phosphoenolpyruvate binding; sequence KN. R93 is a UDP-N-acetyl-alpha-D-glucosamine binding site. C117 (proton donor) is an active-site residue. C117 bears the 2-(S-cysteinyl)pyruvic acid O-phosphothioketal mark. Residues 122–126, D308, and I330 contribute to the UDP-N-acetyl-alpha-D-glucosamine site; that span reads RPVDL.

Belongs to the EPSP synthase family. MurA subfamily.

It is found in the cytoplasm. The catalysed reaction is phosphoenolpyruvate + UDP-N-acetyl-alpha-D-glucosamine = UDP-N-acetyl-3-O-(1-carboxyvinyl)-alpha-D-glucosamine + phosphate. It participates in cell wall biogenesis; peptidoglycan biosynthesis. Cell wall formation. Adds enolpyruvyl to UDP-N-acetylglucosamine. The protein is UDP-N-acetylglucosamine 1-carboxyvinyltransferase of Pseudomonas syringae pv. tomato (strain ATCC BAA-871 / DC3000).